A 209-amino-acid polypeptide reads, in one-letter code: High frequency lysogenization protein HflD homolog (209 aa).

Positions 95 to 132 form a coiled coil; the sequence is LERKLAASKGAMNTLGNRIADLSRQLEHFELESDTLMS.

Belongs to the HflD family.

It localises to the cytoplasm. Its subcellular location is the cell inner membrane. The protein is High frequency lysogenization protein HflD homolog of Cronobacter sakazakii (strain ATCC BAA-894) (Enterobacter sakazakii).